The chain runs to 374 residues: UDP-N-acetylglucosamine--N-acetylmuramyl-(pentapeptide) pyrophosphoryl-undecaprenol N-acetylglucosamine transferase (374 aa).

UDP-N-acetyl-alpha-D-glucosamine is bound by residues 13–15 (TGG), asparagine 124, arginine 165, serine 193, and glutamine 294.

Belongs to the glycosyltransferase 28 family. MurG subfamily.

Its subcellular location is the cell inner membrane. It carries out the reaction di-trans,octa-cis-undecaprenyl diphospho-N-acetyl-alpha-D-muramoyl-L-alanyl-D-glutamyl-meso-2,6-diaminopimeloyl-D-alanyl-D-alanine + UDP-N-acetyl-alpha-D-glucosamine = di-trans,octa-cis-undecaprenyl diphospho-[N-acetyl-alpha-D-glucosaminyl-(1-&gt;4)]-N-acetyl-alpha-D-muramoyl-L-alanyl-D-glutamyl-meso-2,6-diaminopimeloyl-D-alanyl-D-alanine + UDP + H(+). It participates in cell wall biogenesis; peptidoglycan biosynthesis. Functionally, cell wall formation. Catalyzes the transfer of a GlcNAc subunit on undecaprenyl-pyrophosphoryl-MurNAc-pentapeptide (lipid intermediate I) to form undecaprenyl-pyrophosphoryl-MurNAc-(pentapeptide)GlcNAc (lipid intermediate II). In Rhizobium etli (strain CIAT 652), this protein is UDP-N-acetylglucosamine--N-acetylmuramyl-(pentapeptide) pyrophosphoryl-undecaprenol N-acetylglucosamine transferase.